The sequence spans 207 residues: Protein-L-isoaspartate O-methyltransferase (207 aa).

Residue Ser56 is part of the active site.

Belongs to the methyltransferase superfamily. L-isoaspartyl/D-aspartyl protein methyltransferase family.

It localises to the cytoplasm. It carries out the reaction [protein]-L-isoaspartate + S-adenosyl-L-methionine = [protein]-L-isoaspartate alpha-methyl ester + S-adenosyl-L-homocysteine. In terms of biological role, catalyzes the methyl esterification of L-isoaspartyl residues in peptides and proteins that result from spontaneous decomposition of normal L-aspartyl and L-asparaginyl residues. It plays a role in the repair and/or degradation of damaged proteins. This is Protein-L-isoaspartate O-methyltransferase from Pyrobaculum neutrophilum (strain DSM 2338 / JCM 9278 / NBRC 100436 / V24Sta) (Thermoproteus neutrophilus).